Consider the following 518-residue polypeptide: Zinc finger protein 776 (518 aa).

Residues 14 to 89 enclose the KRAB domain; sequence VTFEDVAVNF…HWTGVCTKKV (76 aa). Glycyl lysine isopeptide (Lys-Gly) (interchain with G-Cter in SUMO2) cross-links involve residues Lys-171, Lys-196, Lys-220, and Lys-247. Residues 208–230 form a C2H2-type 1; degenerate zinc finger; the sequence is YICGESTIPFSNKHSLVLHQRLL. A C2H2-type 2; degenerate zinc finger spans residues 236-258; the sequence is YVCSDSGKFTSKSNSFNNHQGVR. 7 consecutive C2H2-type zinc fingers follow at residues 264-286, 292-314, 320-342, 348-370, 376-398, 404-426, and 432-454; these read YQCGQCDESFWYKAHLTEHQRVH, YECGECDKSFSHKHSLVDHQRVH, YECDECGKSFSHKRSLVHHQRVH, YQCGECGKSFNHKCNLIQHQRVH, FECTACGKLFRSNSHLKEHQRVH, YECKECRKSFRYKSHLTEHQRVH, and YECRECGKCFHQKGSLIQHQQIH. A C2H2-type 10; degenerate zinc finger spans residues 460–482; it reads HECGECGKCFHQKGSLIRHQQIH. A C2H2-type 11 zinc finger spans residues 488–510; sequence HECGECGKCFRQKGNLIKHQRVH.

Belongs to the krueppel C2H2-type zinc-finger protein family.

Its subcellular location is the nucleus. May be involved in transcriptional regulation. The protein is Zinc finger protein 776 (ZNF776) of Homo sapiens (Human).